The sequence spans 522 residues: Tetratricopeptide repeat protein 39C (522 aa).

TPR repeat units follow at residues 254 to 287 (SLFMFFKGRIQRLECQINSALTSFHTALELAVDQ), 292 to 325 (HVCLYEIGWCSMIELNFKDAFDSFERLKNESRWS), and 424 to 457 (GLKHLLLGAIHKCLGNSQDAVQFFQRAAKDESCR).

This sequence belongs to the TTC39 family.

This Rattus norvegicus (Rat) protein is Tetratricopeptide repeat protein 39C (Ttc39c).